The primary structure comprises 266 residues: Ribosomal RNA small subunit methyltransferase A (266 aa).

The S-adenosyl-L-methionine site is built by N16, L18, G43, E64, D89, and N110.

It belongs to the class I-like SAM-binding methyltransferase superfamily. rRNA adenine N(6)-methyltransferase family. RsmA subfamily.

The protein localises to the cytoplasm. The catalysed reaction is adenosine(1518)/adenosine(1519) in 16S rRNA + 4 S-adenosyl-L-methionine = N(6)-dimethyladenosine(1518)/N(6)-dimethyladenosine(1519) in 16S rRNA + 4 S-adenosyl-L-homocysteine + 4 H(+). Its function is as follows. Specifically dimethylates two adjacent adenosines (A1518 and A1519) in the loop of a conserved hairpin near the 3'-end of 16S rRNA in the 30S particle. May play a critical role in biogenesis of 30S subunits. The chain is Ribosomal RNA small subunit methyltransferase A from Marinomonas sp. (strain MWYL1).